A 667-amino-acid chain; its full sequence is Threonine--tRNA ligase (667 aa).

Residues 1–64 (MSEAISLTFP…TDGKIEIVTR (64 aa)) enclose the TGS domain. The tract at residues 245-553 (DHRRLGREMD…LIENFAGHMP (309 aa)) is catalytic. Residues Cys-347, His-398, and His-530 each contribute to the Zn(2+) site.

It belongs to the class-II aminoacyl-tRNA synthetase family. As to quaternary structure, homodimer. Requires Zn(2+) as cofactor.

Its subcellular location is the cytoplasm. The enzyme catalyses tRNA(Thr) + L-threonine + ATP = L-threonyl-tRNA(Thr) + AMP + diphosphate + H(+). Its function is as follows. Catalyzes the attachment of threonine to tRNA(Thr) in a two-step reaction: L-threonine is first activated by ATP to form Thr-AMP and then transferred to the acceptor end of tRNA(Thr). Also edits incorrectly charged L-seryl-tRNA(Thr). This Agrobacterium fabrum (strain C58 / ATCC 33970) (Agrobacterium tumefaciens (strain C58)) protein is Threonine--tRNA ligase.